The chain runs to 368 residues: Glutamate 5-kinase (368 aa).

K11 serves as a coordination point for ATP. Positions 51, 138, and 150 each coordinate substrate. ATP contacts are provided by residues T170–D171 and T212–K218. The 79-residue stretch at A276–E354 folds into the PUA domain.

Belongs to the glutamate 5-kinase family.

It is found in the cytoplasm. The enzyme catalyses L-glutamate + ATP = L-glutamyl 5-phosphate + ADP. It functions in the pathway amino-acid biosynthesis; L-proline biosynthesis; L-glutamate 5-semialdehyde from L-glutamate: step 1/2. In terms of biological role, catalyzes the transfer of a phosphate group to glutamate to form L-glutamate 5-phosphate. The sequence is that of Glutamate 5-kinase from Photorhabdus laumondii subsp. laumondii (strain DSM 15139 / CIP 105565 / TT01) (Photorhabdus luminescens subsp. laumondii).